The sequence spans 287 residues: Phosphatidylserine decarboxylase proenzyme (287 aa).

Residues Asp-90, His-147, and Ser-252 each act as charge relay system; for autoendoproteolytic cleavage activity in the active site. Catalysis depends on Ser-252, which acts as the Schiff-base intermediate with substrate; via pyruvic acid; for decarboxylase activity. Pyruvic acid (Ser); by autocatalysis is present on Ser-252.

Belongs to the phosphatidylserine decarboxylase family. PSD-B subfamily. Prokaryotic type I sub-subfamily. In terms of assembly, heterodimer of a large membrane-associated beta subunit and a small pyruvoyl-containing alpha subunit. Requires pyruvate as cofactor. In terms of processing, is synthesized initially as an inactive proenzyme. Formation of the active enzyme involves a self-maturation process in which the active site pyruvoyl group is generated from an internal serine residue via an autocatalytic post-translational modification. Two non-identical subunits are generated from the proenzyme in this reaction, and the pyruvate is formed at the N-terminus of the alpha chain, which is derived from the carboxyl end of the proenzyme. The autoendoproteolytic cleavage occurs by a canonical serine protease mechanism, in which the side chain hydroxyl group of the serine supplies its oxygen atom to form the C-terminus of the beta chain, while the remainder of the serine residue undergoes an oxidative deamination to produce ammonia and the pyruvoyl prosthetic group on the alpha chain. During this reaction, the Ser that is part of the protease active site of the proenzyme becomes the pyruvoyl prosthetic group, which constitutes an essential element of the active site of the mature decarboxylase.

It localises to the cell membrane. The enzyme catalyses a 1,2-diacyl-sn-glycero-3-phospho-L-serine + H(+) = a 1,2-diacyl-sn-glycero-3-phosphoethanolamine + CO2. It participates in phospholipid metabolism; phosphatidylethanolamine biosynthesis; phosphatidylethanolamine from CDP-diacylglycerol: step 2/2. Functionally, catalyzes the formation of phosphatidylethanolamine (PtdEtn) from phosphatidylserine (PtdSer). The protein is Phosphatidylserine decarboxylase proenzyme of Pseudomonas putida (strain GB-1).